A 737-amino-acid polypeptide reads, in one-letter code: Catalase-peroxidase (737 aa).

Positions 1–29 (MTDSPDATTGGCPVAHGDRLPHPTQGGAN) are disordered. Positions 101–227 (WHSAGTYRVS…LGATHMGLIY (127 aa)) form a cross-link, tryptophyl-tyrosyl-methioninium (Trp-Tyr) (with M-253). H102 acts as the Proton acceptor in catalysis. A cross-link (tryptophyl-tyrosyl-methioninium (Tyr-Met) (with W-101)) is located at residues 227–253 (YVNPEGPEGKPDPVAAARDIRETFGRM). Heme b is bound at residue H268.

Belongs to the peroxidase family. Peroxidase/catalase subfamily. Homodimer or homotetramer. The cofactor is heme b. Post-translationally, formation of the three residue Trp-Tyr-Met cross-link is important for the catalase, but not the peroxidase activity of the enzyme.

It catalyses the reaction H2O2 + AH2 = A + 2 H2O. It carries out the reaction 2 H2O2 = O2 + 2 H2O. In terms of biological role, bifunctional enzyme with both catalase and broad-spectrum peroxidase activity. The protein is Catalase-peroxidase of Saccharopolyspora erythraea (strain ATCC 11635 / DSM 40517 / JCM 4748 / NBRC 13426 / NCIMB 8594 / NRRL 2338).